Here is a 415-residue protein sequence, read N- to C-terminus: Dynein assembly factor with WD repeat domains 1 (415 aa).

8 WD repeats span residues 90–129 (AHIL…ELHT), 132–172 (GHRN…CFYT), 175–214 (GHTA…EVST), 217–256 (GHFA…KVHV), 259–298 (GHRG…CLAT), 301–340 (GHND…CLCQ), 343–384 (GHKG…QVLE), and 385–415 (GHSD…RIWH).

The protein belongs to the WD repeat WDR69 family. As to expression, expressed in organs bearing motile cilia, including the pronephros, otic vesicles and Kupffer's vesicle.

It is found in the cytoplasm. The protein localises to the cytoskeleton. It localises to the flagellum basal body. The protein resides in the flagellum axoneme. Required for axonemal dynein assembly and ciliary motility in ciliated organs, including Kupffer's vesicle, during embryogenesis. Facilitates the onset of robust cilia motility during development. The chain is Dynein assembly factor with WD repeat domains 1 (daw1) from Danio rerio (Zebrafish).